Reading from the N-terminus, the 210-residue chain is Putative cutinase (210 aa).

The segment covering 26–38 (DSERLPLKRDEPG) has biased composition (basic and acidic residues). The segment at 26-58 (DSERLPLKRDEPGSRSMRSTFIPSSQCSNLSSA) is disordered. Residues 49–58 (SSQCSNLSSA) are compositionally biased toward low complexity.

The enzyme catalyses cutin + H2O = cutin monomers.. This Phytophthora capsici protein is Putative cutinase.